We begin with the raw amino-acid sequence, 65 residues long: Large ribosomal subunit protein bL35 (65 aa).

Positions 1 to 23 are disordered; the sequence is MPKMKTHRGAAKRFKKTGTGKLK.

The protein belongs to the bacterial ribosomal protein bL35 family.

The sequence is that of Large ribosomal subunit protein bL35 from Clostridium perfringens (strain ATCC 13124 / DSM 756 / JCM 1290 / NCIMB 6125 / NCTC 8237 / Type A).